The chain runs to 752 residues: Neuroendocrine convertase 1 (752 aa).

The first 27 residues, 1–27 (MKQRGWTLQCTAFTLFCVWCALNSVKA), serve as a signal peptide directing secretion. Residues 28–110 (KRQFVNEWAA…QQYEKERRKR (83 aa)) constitute a propeptide that is removed on maturation. Residues 129–450 (QWYLQDTRMT…FGLLNAKALV (322 aa)) form the Peptidase S8 domain. Aspartate 167 acts as the Charge relay system in catalysis. Asparagine 173 carries an N-linked (GlcNAc...) asparagine glycan. The active-site Charge relay system is the histidine 208. 2 disulfides stabilise this stretch: cysteine 225–cysteine 374 and cysteine 317–cysteine 347. Serine 382 (charge relay system) is an active-site residue. The N-linked (GlcNAc...) asparagine glycan is linked to asparagine 401. The 138-residue stretch at 460–597 (NVPEKKECII…KLILHGTSSQ (138 aa)) folds into the P/Homo B domain. Cysteine 467 and cysteine 494 are joined by a disulfide. The segment at 631-662 (PTQNSLNGNLLVPKNSSSSSVEDRRDEQVQGA) is disordered. Asparagine 645 carries an N-linked (GlcNAc...) asparagine glycan.

Belongs to the peptidase S8 family. Furin subfamily. Ca(2+) serves as cofactor.

The protein resides in the cytoplasmic vesicle. The protein localises to the secretory vesicle. The catalysed reaction is Release of protein hormones, neuropeptides and renin from their precursors, generally by hydrolysis of -Lys-Arg-|- bonds.. Functionally, involved in the processing of hormone and other protein precursors at sites comprised of pairs of basic amino acid residues. Substrates include POMC, renin, enkephalin, dynorphin, somatostatin, insulin and AGRP. The polypeptide is Neuroendocrine convertase 1 (Pcsk1) (Rattus norvegicus (Rat)).